A 164-amino-acid polypeptide reads, in one-letter code: Large ribosomal subunit protein bL9 (164 aa).

The protein belongs to the bacterial ribosomal protein bL9 family.

Binds to the 23S rRNA. In Borrelia recurrentis (strain A1), this protein is Large ribosomal subunit protein bL9.